A 1485-amino-acid chain; its full sequence is ABC multidrug transporter I (1485 aa).

Disordered stretches follow at residues Met1–Ser57 and Lys75–Gly111. Residues Ser8–Ala24 show a composition bias toward polar residues. Asn12 carries an N-linked (GlcNAc...) asparagine glycan. A compositionally biased stretch (basic and acidic residues) spans Gly85–Ser95. Asn132, Asn335, and Asn451 each carry an N-linked (GlcNAc...) asparagine glycan. The ABC transporter 1 domain occupies Met163–Pro411. The next 7 helical transmembrane spans lie at Phe522 to Trp542, Gly556 to Ser576, Ile600 to Ile620, Phe623 to Leu643, Tyr664 to Ile684, Glu691 to Val711, and Phe774 to Thr794. Positions Phe846–Ala1089 constitute an ABC transporter 2 domain. Residue Gly882–Thr889 coordinates ATP. 5 consecutive transmembrane segments (helical) span residues Tyr1184–Leu1204, Ala1211–Leu1231, Leu1268–Phe1288, Phe1299–Leu1319, and Ile1325–Ile1345. N-linked (GlcNAc...) asparagine glycans are attached at residues Asn1396 and Asn1418. A helical membrane pass occupies residues Leu1449–Phe1469.

It belongs to the ABC transporter superfamily. ABCG family. PDR (TC 3.A.1.205) subfamily.

Its subcellular location is the cell membrane. The enzyme catalyses fluconazole(in) + ATP + H2O = fluconazole(out) + ADP + phosphate + H(+). With respect to regulation, the efflux inhibitor FK506 does not impair the transport activity. Its function is as follows. ABC efflux transporter that confers resistance to fluconazole (FLC) but shows no resistance to other azoles. Is also able to transport rhodamine 6G (R-6G), a known substrate for many ABC transporters. The polypeptide is ABC multidrug transporter I (Aspergillus fumigatus (strain ATCC MYA-4609 / CBS 101355 / FGSC A1100 / Af293) (Neosartorya fumigata)).